We begin with the raw amino-acid sequence, 419 residues long: 26S proteasome regulatory subunit 8 homolog B (419 aa).

202–209 (GPPGTGKT) is a binding site for ATP. Lys406 participates in a covalent cross-link: Glycyl lysine isopeptide (Lys-Gly) (interchain with G-Cter in ubiquitin).

This sequence belongs to the AAA ATPase family. As to quaternary structure, component of the 19S regulatory particle (RP/PA700) base subcomplex of the 26S proteasome. The 26S proteasome is composed of a core protease (CP), known as the 20S proteasome, capped at one or both ends by the 19S regulatory particle (RP/PA700). The RP/PA700 complex is composed of at least 17 different subunits in two subcomplexes, the base and the lid, which form the portions proximal and distal to the 20S proteolytic core, respectively.

The protein resides in the cytoplasm. It is found in the nucleus. Functionally, the 26S proteasome is involved in the ATP-dependent degradation of ubiquitinated proteins. The regulatory (or ATPase) complex confers ATP dependency and substrate specificity to the 26S complex. The sequence is that of 26S proteasome regulatory subunit 8 homolog B (RPT6B) from Arabidopsis thaliana (Mouse-ear cress).